The primary structure comprises 88 residues: L-amino-acid oxidase (88 aa).

Residues Glu-74 and 81–86 (GWIDST) each bind FAD. A substrate-binding site is contributed by 81 to 82 (GW).

It belongs to the flavin monoamine oxidase family. FIG1 subfamily. In terms of assembly, homodimer; non-covalently linked. Requires FAD as cofactor. Post-translationally, N-glycosylated. In terms of tissue distribution, expressed by the venom gland.

The protein localises to the secreted. It catalyses the reaction an L-alpha-amino acid + O2 + H2O = a 2-oxocarboxylate + H2O2 + NH4(+). The catalysed reaction is L-leucine + O2 + H2O = 4-methyl-2-oxopentanoate + H2O2 + NH4(+). The enzyme catalyses L-phenylalanine + O2 + H2O = 3-phenylpyruvate + H2O2 + NH4(+). It carries out the reaction L-tryptophan + O2 + H2O = indole-3-pyruvate + H2O2 + NH4(+). It catalyses the reaction L-methionine + O2 + H2O = 4-methylsulfanyl-2-oxobutanoate + H2O2 + NH4(+). The catalysed reaction is L-isoleucine + O2 + H2O = (S)-3-methyl-2-oxopentanoate + H2O2 + NH4(+). The enzyme catalyses L-arginine + O2 + H2O = 5-guanidino-2-oxopentanoate + H2O2 + NH4(+). It carries out the reaction L-histidine + O2 + H2O = 3-(imidazol-5-yl)pyruvate + H2O2 + NH4(+). It catalyses the reaction L-asparagine + O2 + H2O = 2-oxosuccinamate + H2O2 + NH4(+). The catalysed reaction is L-valine + O2 + H2O = 3-methyl-2-oxobutanoate + H2O2 + NH4(+). The enzyme catalyses L-glutamate + O2 + H2O = H2O2 + 2-oxoglutarate + NH4(+). Catalyzes an oxidative deamination of predominantly hydrophobic and aromatic L-amino acids, thus producing hydrogen peroxide that may contribute to the diverse toxic effects of this enzyme. Is highly active on L-Met, L-Leu, L-Phe, L-Ile, and L-Arg, moderately active on L-His, L-Trp, L-Asn, L-Glu, and L-Val, and weakly or not active on L-Gln, L-Lys, L-Asp, L-Ala, L-Tyr, L-Ser, L-Pro, L-Gly, L-Thr, and L-Cys. Exhibits diverse biological activities, such as hemorrhage, hemolysis, edema, apoptosis of vascular endothelial cells or tumor cell lines, antibacterial and antiparasitic activities. In addition, this protein has an ability to induce apoptosis in cultured HeLa and K562 cells, and inhibits ADP-induced platelet aggregation dose-dependently. Effects of snake L-amino oxidases on platelets are controversial, since they either induce aggregation or inhibit agonist-induced aggregation. These different effects are probably due to different experimental conditions. The chain is L-amino-acid oxidase from Vipera berus berus (Common viper).